Consider the following 416-residue polypeptide: Gamma-glutamyl phosphate reductase (416 aa).

It belongs to the gamma-glutamyl phosphate reductase family.

The protein localises to the cytoplasm. The enzyme catalyses L-glutamate 5-semialdehyde + phosphate + NADP(+) = L-glutamyl 5-phosphate + NADPH + H(+). It functions in the pathway amino-acid biosynthesis; L-proline biosynthesis; L-glutamate 5-semialdehyde from L-glutamate: step 2/2. Its function is as follows. Catalyzes the NADPH-dependent reduction of L-glutamate 5-phosphate into L-glutamate 5-semialdehyde and phosphate. The product spontaneously undergoes cyclization to form 1-pyrroline-5-carboxylate. This is Gamma-glutamyl phosphate reductase from Streptococcus uberis (strain ATCC BAA-854 / 0140J).